A 188-amino-acid polypeptide reads, in one-letter code: PRA1 family protein F3 (188 aa).

4 consecutive transmembrane segments (helical) span residues 74-94, 95-115, 123-143, and 145-165; these read IVVLIVIFFSLIWHPTSLIVF, TVLVVVWIFLYFLRDEPIKLF, TVLIVLSVLTVVLLLLTNATF, and IVGALVTGAVLVLIHSVVRKT.

This sequence belongs to the PRA1 family. In terms of assembly, interacts with PRA1F2 and PRA1D. Interacts with ACD11 and BPA1. In terms of tissue distribution, expressed in lateral roots, lateral root caps and columella cells.

It localises to the endoplasmic reticulum membrane. It is found in the membrane. The protein localises to the cytoplasm. Functionally, may be involved in both secretory and endocytic intracellular trafficking in the endosomal/prevacuolar compartments. The sequence is that of PRA1 family protein F3 from Arabidopsis thaliana (Mouse-ear cress).